We begin with the raw amino-acid sequence, 502 residues long: Lysine--tRNA ligase (502 aa).

Mg(2+) is bound by residues glutamate 409 and glutamate 416.

This sequence belongs to the class-II aminoacyl-tRNA synthetase family. As to quaternary structure, homodimer. The cofactor is Mg(2+).

It is found in the cytoplasm. The catalysed reaction is tRNA(Lys) + L-lysine + ATP = L-lysyl-tRNA(Lys) + AMP + diphosphate. The sequence is that of Lysine--tRNA ligase from Shouchella clausii (strain KSM-K16) (Alkalihalobacillus clausii).